The sequence spans 456 residues: Dual-specificity RNA methyltransferase RlmN (456 aa).

A disordered region spans residues 1-21 (MIQRHLGQPRLIQNGGDAGGV). Glu-175 acts as the Proton acceptor in catalysis. One can recognise a Radical SAM core domain in the interval 183-416 (DEERGAVCIS…QDAGYSAPIR (234 aa)). The cysteines at positions 190 and 427 are disulfide-linked. [4Fe-4S] cluster contacts are provided by Cys-197, Cys-201, and Cys-204. Residues 253-254 (GE), Ser-285, 307-309 (SLH), and Asn-384 contribute to the S-adenosyl-L-methionine site. Cys-427 (S-methylcysteine intermediate) is an active-site residue.

It belongs to the radical SAM superfamily. RlmN family. The cofactor is [4Fe-4S] cluster.

The protein localises to the cytoplasm. It carries out the reaction adenosine(2503) in 23S rRNA + 2 reduced [2Fe-2S]-[ferredoxin] + 2 S-adenosyl-L-methionine = 2-methyladenosine(2503) in 23S rRNA + 5'-deoxyadenosine + L-methionine + 2 oxidized [2Fe-2S]-[ferredoxin] + S-adenosyl-L-homocysteine. It catalyses the reaction adenosine(37) in tRNA + 2 reduced [2Fe-2S]-[ferredoxin] + 2 S-adenosyl-L-methionine = 2-methyladenosine(37) in tRNA + 5'-deoxyadenosine + L-methionine + 2 oxidized [2Fe-2S]-[ferredoxin] + S-adenosyl-L-homocysteine. Functionally, specifically methylates position 2 of adenine 2503 in 23S rRNA and position 2 of adenine 37 in tRNAs. m2A2503 modification seems to play a crucial role in the proofreading step occurring at the peptidyl transferase center and thus would serve to optimize ribosomal fidelity. The chain is Dual-specificity RNA methyltransferase RlmN from Paramagnetospirillum magneticum (strain ATCC 700264 / AMB-1) (Magnetospirillum magneticum).